The following is a 424-amino-acid chain: Pachytene checkpoint protein 2 homolog (424 aa).

Position 171–178 (171–178 (GPPGTGKT)) interacts with ATP.

This sequence belongs to the AAA ATPase family. PCH2 subfamily.

Its function is as follows. Plays a key role in chromosome recombination and chromosome structure development during meiosis. Required at early steps in meiotic recombination that leads to non-crossovers pathways. Also needed for efficient completion of homologous synapsis by influencing crossover distribution along the chromosomes affecting both crossovers and non-crossovers pathways. The sequence is that of Pachytene checkpoint protein 2 homolog (trip13) from Danio rerio (Zebrafish).